The primary structure comprises 240 residues: tRNA (guanine-N(1)-)-methyltransferase (240 aa).

S-adenosyl-L-methionine contacts are provided by residues Gly110 and 129–134 (LGDFVL).

Belongs to the RNA methyltransferase TrmD family. In terms of assembly, homodimer.

It localises to the cytoplasm. The catalysed reaction is guanosine(37) in tRNA + S-adenosyl-L-methionine = N(1)-methylguanosine(37) in tRNA + S-adenosyl-L-homocysteine + H(+). In terms of biological role, specifically methylates guanosine-37 in various tRNAs. The protein is tRNA (guanine-N(1)-)-methyltransferase of Clostridium botulinum (strain Kyoto / Type A2).